Here is a 361-residue protein sequence, read N- to C-terminus: Chorismate synthase (361 aa).

NADP(+)-binding residues include Arg48 and Arg54. Residues 125–127 (RSS), 238–239 (NA), Gly278, 293–297 (KPTSS), and Arg319 contribute to the FMN site.

The protein belongs to the chorismate synthase family. In terms of assembly, homotetramer. It depends on FMNH2 as a cofactor.

It catalyses the reaction 5-O-(1-carboxyvinyl)-3-phosphoshikimate = chorismate + phosphate. It participates in metabolic intermediate biosynthesis; chorismate biosynthesis; chorismate from D-erythrose 4-phosphate and phosphoenolpyruvate: step 7/7. Its function is as follows. Catalyzes the anti-1,4-elimination of the C-3 phosphate and the C-6 proR hydrogen from 5-enolpyruvylshikimate-3-phosphate (EPSP) to yield chorismate, which is the branch point compound that serves as the starting substrate for the three terminal pathways of aromatic amino acid biosynthesis. This reaction introduces a second double bond into the aromatic ring system. In Pectobacterium carotovorum subsp. carotovorum (strain PC1), this protein is Chorismate synthase.